The following is a 612-amino-acid chain: Phosphopentomutase (612 aa).

Residue Ala-2 is modified to N-acetylalanine. Alpha-D-glucose 1,6-bisphosphate is bound by residues Arg-63 and Ser-165. The Phosphoserine intermediate role is filled by Ser-165. Ser-165, Asp-322, Asp-324, and Asp-326 together coordinate Mg(2+). Ser-165 is subject to Phosphoserine. Residues Asp-326, Arg-327, Thr-400, Glu-424, and Lys-438 each contribute to the alpha-D-glucose 1,6-bisphosphate site.

This sequence belongs to the phosphohexose mutase family. As to quaternary structure, monomer. It depends on Mg(2+) as a cofactor.

The protein localises to the cytoplasm. The protein resides in the cytosol. The catalysed reaction is alpha-D-ribose 1-phosphate = D-ribose 5-phosphate. It catalyses the reaction 2-deoxy-alpha-D-ribose 1-phosphate = 2-deoxy-D-ribose 5-phosphate. It carries out the reaction alpha-D-glucose 1-phosphate = alpha-D-glucose 6-phosphate. The enzyme catalyses O-phospho-L-seryl-[protein] + alpha-D-glucose 1-phosphate = alpha-D-glucose 1,6-bisphosphate + L-seryl-[protein]. The catalysed reaction is alpha-D-glucose 1,6-bisphosphate + L-seryl-[protein] = O-phospho-L-seryl-[protein] + alpha-D-glucose 6-phosphate. With respect to regulation, the phosphomutase activity is stimulated by glucose 1,6-bisphosphate. Catalyzes the conversion of the nucleoside breakdown products ribose-1-phosphate and deoxyribose-1-phosphate to the corresponding 5-phosphopentoses. Catalyzes the reversible isomerization of alpha-D-glucose 1-phosphate to alpha-D-glucose 6-phosphate but with a lower catalytic efficiency. The mechanism proceeds via the intermediate compound alpha-D-glucose 1,6-bisphosphate. In vitro, also has a low glucose 1,6-bisphosphate synthase activity which is most probably not physiologically relevant. This is Phosphopentomutase from Homo sapiens (Human).